A 579-amino-acid chain; its full sequence is Protein O-linked-mannose beta-1,4-N-acetylglucosaminyltransferase 2 (579 aa).

Over 1–4 (MGVG) the chain is Cytoplasmic. The helical; Signal-anchor for type II membrane protein transmembrane segment at 5-25 (TLLNGLLVSVVAALLWKYSKL) threads the bilayer. Over 26 to 579 (SEHAALLEEE…PFADVLMCRT (554 aa)) the chain is Lumenal. 3 N-linked (GlcNAc...) asparagine glycosylation sites follow: Asn98, Asn275, and Asn542. The 100-residue stretch at 480-579 (HPGRVRDARC…PFADVLMCRT (100 aa)) folds into the Fibronectin type-III domain.

This sequence belongs to the glycosyltransferase 61 family.

The protein localises to the endoplasmic reticulum membrane. It catalyses the reaction 3-O-(alpha-D-mannosyl)-L-threonyl-[protein] + UDP-N-acetyl-alpha-D-glucosamine = 3-O-(N-acetyl-beta-D-glucosaminyl-(1-&gt;4)-alpha-D-mannosyl)-L-threonyl-[protein] + UDP + H(+). It participates in protein modification; protein glycosylation. Its function is as follows. O-linked mannose beta-1,4-N-acetylglucosaminyltransferase that transfers UDP-N-acetyl-D-glucosamine to the 4-position of the mannose to generate N-acetyl-D-glucosamine-beta-1,4-O-D-mannosylprotein. Involved in the biosynthesis of the phosphorylated O-mannosyl trisaccharide (N-acetylgalactosamine-beta-3-N-acetylglucosamine-beta-4-(phosphate-6-)mannose), a carbohydrate structure present in alpha-dystroglycan (DAG1), which is required for binding laminin G-like domain-containing extracellular proteins with high affinity. The sequence is that of Protein O-linked-mannose beta-1,4-N-acetylglucosaminyltransferase 2 (pomgnt2) from Tetraodon nigroviridis (Spotted green pufferfish).